We begin with the raw amino-acid sequence, 102 residues long: MTGIPMEHGLALAAALFCIGLVGLMVRRNILFILMSLEVMMNAAALAFVVAGARWGQPDGQVMFIMVITLAAAEASIGLAILLQLYRRFNTLDIDAASEMRG.

A run of 3 helical transmembrane segments spans residues 6 to 26, 30 to 50, and 62 to 82; these read MEHG…GLMV, ILFI…AFVV, and VMFI…LAIL.

It belongs to the complex I subunit 4L family. As to quaternary structure, NDH-1 is composed of 13 different subunits. Subunits NuoA, H, J, K, L, M, N constitute the membrane sector of the complex.

The protein localises to the cell inner membrane. It catalyses the reaction a quinone + NADH + 5 H(+)(in) = a quinol + NAD(+) + 4 H(+)(out). Its function is as follows. NDH-1 shuttles electrons from NADH, via FMN and iron-sulfur (Fe-S) centers, to quinones in the respiratory chain. The immediate electron acceptor for the enzyme in this species is believed to be ubiquinone. Couples the redox reaction to proton translocation (for every two electrons transferred, four hydrogen ions are translocated across the cytoplasmic membrane), and thus conserves the redox energy in a proton gradient. In Ectopseudomonas mendocina (strain ymp) (Pseudomonas mendocina), this protein is NADH-quinone oxidoreductase subunit K.